Reading from the N-terminus, the 104-residue chain is Large ribosomal subunit protein uL24 (104 aa).

The disordered stretch occupies residues 82 to 104; sequence RVGYRFDENGKKVRVSRRNGKDI. A compositionally biased stretch (basic residues) spans 93 to 104; it reads KVRVSRRNGKDI.

Belongs to the universal ribosomal protein uL24 family. Part of the 50S ribosomal subunit.

Functionally, one of two assembly initiator proteins, it binds directly to the 5'-end of the 23S rRNA, where it nucleates assembly of the 50S subunit. One of the proteins that surrounds the polypeptide exit tunnel on the outside of the subunit. This Corynebacterium glutamicum (strain R) protein is Large ribosomal subunit protein uL24.